Consider the following 276-residue polypeptide: 2-dehydro-3-deoxyphosphooctonate aldolase (276 aa).

The protein belongs to the KdsA family.

It localises to the cytoplasm. It carries out the reaction D-arabinose 5-phosphate + phosphoenolpyruvate + H2O = 3-deoxy-alpha-D-manno-2-octulosonate-8-phosphate + phosphate. The protein operates within carbohydrate biosynthesis; 3-deoxy-D-manno-octulosonate biosynthesis; 3-deoxy-D-manno-octulosonate from D-ribulose 5-phosphate: step 2/3. It functions in the pathway bacterial outer membrane biogenesis; lipopolysaccharide biosynthesis. This is 2-dehydro-3-deoxyphosphooctonate aldolase from Xanthomonas campestris pv. campestris (strain 8004).